Reading from the N-terminus, the 234-residue chain is Uridylate kinase (234 aa).

ATP-binding positions include 8–11 (KLSG), Gly-51, and Arg-55. Residues Asp-68 and 129–136 (TSNPFFTT) contribute to the UMP site. The ATP site is built by Thr-156, Tyr-162, and Asp-165.

It belongs to the UMP kinase family. As to quaternary structure, homohexamer.

It is found in the cytoplasm. The catalysed reaction is UMP + ATP = UDP + ADP. It functions in the pathway pyrimidine metabolism; CTP biosynthesis via de novo pathway; UDP from UMP (UMPK route): step 1/1. Inhibited by UTP. In terms of biological role, catalyzes the reversible phosphorylation of UMP to UDP. The protein is Uridylate kinase of Fervidobacterium nodosum (strain ATCC 35602 / DSM 5306 / Rt17-B1).